We begin with the raw amino-acid sequence, 473 residues long: 1-aminocyclopropane-1-carboxylate synthase (473 aa).

Substrate is bound by residues 84 to 85 (DY), Tyr-145, and Asp-151. Lys-273 is modified (N6-(pyridoxal phosphate)lysine).

Belongs to the class-I pyridoxal-phosphate-dependent aminotransferase family. In terms of assembly, homodimer. Pyridoxal 5'-phosphate serves as cofactor.

The enzyme catalyses S-adenosyl-L-methionine = 1-aminocyclopropane-1-carboxylate + S-methyl-5'-thioadenosine + H(+). The catalysed reaction is (2S)-2-amino-3-butenoate + H2O = 2-oxobutanoate + NH4(+). It functions in the pathway alkene biosynthesis; ethylene biosynthesis via S-adenosyl-L-methionine; ethylene from S-adenosyl-L-methionine: step 1/2. With respect to regulation, inhibited by L-aminoethoxyvinylglycine (AVG). Inhibited by L-vinylglycine (L-VG). Inhibited by S-methylmethionine through a L-VG ketimine intermediate. In terms of biological role, catalyzes the formation of 1-aminocyclopropane-1-carboxylate, a direct precursor of ethylene in higher plants. Also catalyzes the conversion of L-vinylglycine (L-VG) to alpha-ketobutyrate and ammonia. Can use S-methylmethionine as substrate. This chain is 1-aminocyclopropane-1-carboxylate synthase, found in Malus domestica (Apple).